The chain runs to 332 residues: COP9 signalosome complex subunit 5 (332 aa).

The MPN domain maps to Val54–Gly191. His137, His139, and Asp150 together coordinate Zn(2+). Residues His137 to Asp150 carry the JAMM motif motif.

It belongs to the peptidase M67A family. CSN5 subfamily. As to quaternary structure, component of the CSN complex. The holocomplex is comprised of 8 subunits csn1-8. In the complex, it probably interacts directly with csn1, csn2, csn3, csn4, csn6 and csn8. It depends on a divalent metal cation as a cofactor.

It localises to the cytoplasm. The protein resides in the nucleus. Functionally, probable protease subunit of the COP9 signalosome complex (CSN), a complex involved in various cellular and developmental processes. The CSN complex is an essential regulator of the ubiquitin (Ubl) conjugation pathway by mediating the deneddylation of the cullin subunits of E3 ligasew complexes, leading to modify the Ubl ligase activity. In the complex, it probably acts as the catalytic center that mediates the cleavage of Nedd8 from cullins. Csn5 is essential for growth or survival. This Dictyostelium discoideum (Social amoeba) protein is COP9 signalosome complex subunit 5 (csn5).